The chain runs to 148 residues: Large ribosomal subunit protein uL16 (148 aa).

It belongs to the universal ribosomal protein uL16 family. Part of the 50S ribosomal subunit.

Its function is as follows. Binds 23S rRNA and is also seen to make contacts with the A and possibly P site tRNAs. The polypeptide is Large ribosomal subunit protein uL16 (Gloeobacter violaceus (strain ATCC 29082 / PCC 7421)).